Reading from the N-terminus, the 153-residue chain is Peptide deformylase (153 aa).

The Fe cation site is built by C87 and H129. E130 is a catalytic residue. H133 is a binding site for Fe cation.

This sequence belongs to the polypeptide deformylase family. Requires Fe(2+) as cofactor.

The enzyme catalyses N-terminal N-formyl-L-methionyl-[peptide] + H2O = N-terminal L-methionyl-[peptide] + formate. Functionally, removes the formyl group from the N-terminal Met of newly synthesized proteins. Requires at least a dipeptide for an efficient rate of reaction. N-terminal L-methionine is a prerequisite for activity but the enzyme has broad specificity at other positions. The protein is Peptide deformylase of Dictyoglomus turgidum (strain DSM 6724 / Z-1310).